We begin with the raw amino-acid sequence, 277 residues long: Phosphatidylglycerol--prolipoprotein diacylglyceryl transferase (277 aa).

The next 4 membrane-spanning stretches (helical) occupy residues 18–38, 54–74, 91–111, and 115–135; these read IAIY…YFMA, DLLV…YVIF, EGGI…IVFA, and GLSF…GQAI. Residue Arg-137 participates in a 1,2-diacyl-sn-glycero-3-phospho-(1'-sn-glycerol) binding. 3 helical membrane passes run 177–197, 205–225, and 236–256; these read QPTF…LLLL, GELF…IEGM, and LRTA…LWVY.

The protein belongs to the Lgt family.

The protein resides in the cell membrane. It catalyses the reaction L-cysteinyl-[prolipoprotein] + a 1,2-diacyl-sn-glycero-3-phospho-(1'-sn-glycerol) = an S-1,2-diacyl-sn-glyceryl-L-cysteinyl-[prolipoprotein] + sn-glycerol 1-phosphate + H(+). It participates in protein modification; lipoprotein biosynthesis (diacylglyceryl transfer). Functionally, catalyzes the transfer of the diacylglyceryl group from phosphatidylglycerol to the sulfhydryl group of the N-terminal cysteine of a prolipoprotein, the first step in the formation of mature lipoproteins. In Shouchella clausii (strain KSM-K16) (Alkalihalobacillus clausii), this protein is Phosphatidylglycerol--prolipoprotein diacylglyceryl transferase.